The chain runs to 616 residues: MYPLLENINSPADLRLLPRTQLPQLAGELREFLVESVSKTGGHFASNLGSIELTIALHYVFDTPHDRLVWDVGHQTYPHKILTGRRERMHTMRQHNGLAGFPKREESEYDTFGVGHSSTSIGAALGMAVAAKTLGVDRKSVAIIGDGAMTAGQAFEALNNAGAMDTDLLVILNDNDMSISPNVGALNNYLAKLMSGRFYAAMREGSSKVLGIAPPLKEIASKVEEHVKGFFTPGTLFEEFGFNYIGPIDGHDVDVLVDTLKNIRSLKGPQFLHIVTKKGQGYKLAENDPVKYHGVTKFDPANGLASGKGGAGKPQYTQVFGDWLCDMAKLDKRLVGITPAMREGSGMVRFEKEHPDRYYDVAIAEQHAVTFAGGMACDGLKPVVAIYSTFLQRGYDQLIHDVALQNLPVMFALDRAGLVGADGPTHAGAFDLSYLRCIPNMTVMAPSDENECRQLLYTAFQLDTPTAVRYPRGTGPGAEIQQQMAALPIGKGVVRRRGKQVAILAFGSMVHPALAAAEALDATVADMRFVKPLDAELIRKLAQTHELIVTVEENVVMGGAGSGCGEALQAMGLAVPTLHLGLPDDYVEHGDPALLLSLCGLDAAGIEKSIRERLAG.

Residues His-74 and 115 to 117 (GHS) each bind thiamine diphosphate. Asp-146 is a binding site for Mg(2+). Residues 147–148 (GA), Asn-175, Tyr-282, and Glu-365 each bind thiamine diphosphate. Asn-175 is a Mg(2+) binding site.

It belongs to the transketolase family. DXPS subfamily. In terms of assembly, homodimer. Requires Mg(2+) as cofactor. Thiamine diphosphate serves as cofactor.

The enzyme catalyses D-glyceraldehyde 3-phosphate + pyruvate + H(+) = 1-deoxy-D-xylulose 5-phosphate + CO2. The protein operates within metabolic intermediate biosynthesis; 1-deoxy-D-xylulose 5-phosphate biosynthesis; 1-deoxy-D-xylulose 5-phosphate from D-glyceraldehyde 3-phosphate and pyruvate: step 1/1. Functionally, catalyzes the acyloin condensation reaction between C atoms 2 and 3 of pyruvate and glyceraldehyde 3-phosphate to yield 1-deoxy-D-xylulose-5-phosphate (DXP). The sequence is that of 1-deoxy-D-xylulose-5-phosphate synthase from Chromobacterium violaceum (strain ATCC 12472 / DSM 30191 / JCM 1249 / CCUG 213 / NBRC 12614 / NCIMB 9131 / NCTC 9757 / MK).